The chain runs to 150 residues: Myeloid-derived growth factor homolog (150 aa).

A signal peptide spans 1 to 22 (MTFLKYLLILCTIFLMVTNSLS).

The protein belongs to the MYDGF family.

It localises to the secreted. The polypeptide is Myeloid-derived growth factor homolog (Dictyostelium discoideum (Social amoeba)).